A 181-amino-acid chain; its full sequence is Shikimate kinase (181 aa).

11–16 provides a ligand contact to ATP; the sequence is GAGKSK. Ser15 serves as a coordination point for Mg(2+). Positions 33, 58, and 80 each coordinate substrate. Arg128 is an ATP binding site. A substrate-binding site is contributed by Arg144.

The protein belongs to the shikimate kinase family. In terms of assembly, monomer. It depends on Mg(2+) as a cofactor.

It is found in the cytoplasm. The enzyme catalyses shikimate + ATP = 3-phosphoshikimate + ADP + H(+). It participates in metabolic intermediate biosynthesis; chorismate biosynthesis; chorismate from D-erythrose 4-phosphate and phosphoenolpyruvate: step 5/7. In terms of biological role, catalyzes the specific phosphorylation of the 3-hydroxyl group of shikimic acid using ATP as a cosubstrate. This chain is Shikimate kinase, found in Leptospira biflexa serovar Patoc (strain Patoc 1 / Ames).